The chain runs to 282 residues: 4-diphosphocytidyl-2-C-methyl-D-erythritol kinase (282 aa).

K9 is a catalytic residue. 98-108 (PMGGGLGGGSS) contributes to the ATP binding site. Residue D140 is part of the active site.

It belongs to the GHMP kinase family. IspE subfamily. In terms of assembly, homodimer.

It catalyses the reaction 4-CDP-2-C-methyl-D-erythritol + ATP = 4-CDP-2-C-methyl-D-erythritol 2-phosphate + ADP + H(+). The protein operates within isoprenoid biosynthesis; isopentenyl diphosphate biosynthesis via DXP pathway; isopentenyl diphosphate from 1-deoxy-D-xylulose 5-phosphate: step 3/6. Catalyzes the phosphorylation of the position 2 hydroxy group of 4-diphosphocytidyl-2C-methyl-D-erythritol. The chain is 4-diphosphocytidyl-2-C-methyl-D-erythritol kinase from Klebsiella pneumoniae (strain 342).